We begin with the raw amino-acid sequence, 59 residues long: Large ribosomal subunit protein uL30 (59 aa).

The protein belongs to the universal ribosomal protein uL30 family. As to quaternary structure, part of the 50S ribosomal subunit.

The chain is Large ribosomal subunit protein uL30 from Desulfatibacillum aliphaticivorans.